Consider the following 367-residue polypeptide: Putative F-box protein At4g10190 (367 aa).

Residues 3-53 (KRNIVDLPEDLVMEILARVPTVTLVRLQSTSKRWNVLIEDKRFAEQHFTNA) enclose the F-box domain.

The polypeptide is Putative F-box protein At4g10190 (Arabidopsis thaliana (Mouse-ear cress)).